A 273-amino-acid chain; its full sequence is Undecaprenyl-diphosphatase (273 aa).

Transmembrane regions (helical) follow at residues Ser-6–Ser-26, Ala-45–Trp-65, Leu-90–His-110, Leu-116–Ala-136, Tyr-190–Leu-210, Gly-222–Ile-242, and Ile-252–Phe-272.

It belongs to the UppP family.

The protein resides in the cell inner membrane. It carries out the reaction di-trans,octa-cis-undecaprenyl diphosphate + H2O = di-trans,octa-cis-undecaprenyl phosphate + phosphate + H(+). Its function is as follows. Catalyzes the dephosphorylation of undecaprenyl diphosphate (UPP). Confers resistance to bacitracin. The polypeptide is Undecaprenyl-diphosphatase (Escherichia coli O7:K1 (strain IAI39 / ExPEC)).